Here is a 171-residue protein sequence, read N- to C-terminus: Peptidyl-prolyl cis-trans isomerase 7 (171 aa).

In terms of domain architecture, PPIase cyclophilin-type spans F7 to Q170.

The protein belongs to the cyclophilin-type PPIase family.

It catalyses the reaction [protein]-peptidylproline (omega=180) = [protein]-peptidylproline (omega=0). Its function is as follows. PPIases accelerate the folding of proteins. It catalyzes the cis-trans isomerization of proline imidic peptide bonds in oligopeptides. The chain is Peptidyl-prolyl cis-trans isomerase 7 (cyn-7) from Caenorhabditis elegans.